Consider the following 1075-residue polypeptide: Error-prone DNA polymerase (1075 aa).

Belongs to the DNA polymerase type-C family. DnaE2 subfamily.

The protein localises to the cytoplasm. It carries out the reaction DNA(n) + a 2'-deoxyribonucleoside 5'-triphosphate = DNA(n+1) + diphosphate. Its function is as follows. DNA polymerase involved in damage-induced mutagenesis and translesion synthesis (TLS). It is not the major replicative DNA polymerase. In Ralstonia nicotianae (strain ATCC BAA-1114 / GMI1000) (Ralstonia solanacearum), this protein is Error-prone DNA polymerase.